The chain runs to 153 residues: T cell receptor delta constant (153 aa).

The N-linked (GlcNAc...) asparagine glycan is linked to asparagine 14. A disulfide bridge links cysteine 20 with cysteine 71. Asparagine 77 carries N-linked (GlcNAc...) asparagine glycosylation. The span at 85–102 (FEVKTDSTDHVKPKETEN) shows a compositional bias: basic and acidic residues. A disordered region spans residues 85–112 (FEVKTDSTDHVKPKETENTKQPSKSCHK). Residues 130 to 152 (LGLRMLFAKTVAVNFLLTAKLFF) traverse the membrane as a helical segment.

As to quaternary structure, gamma-delta TR is a heterodimer composed of a gamma and delta chain; disulfide-linked. The gamma-delta TR is associated with the transmembrane signaling CD3 coreceptor proteins following the stoichiometry: a single gamma-delta TR heterodimer associates with one CD3D-CD3E heterodimer, one CD3G-CD3E heterodimer and one CD247 homodimer forming a stable octameric structure. Upon activation, gamma-delta TR complex associates with FCER1G to initiate intracellular signaling.

The protein resides in the cell membrane. Its function is as follows. Constant region of T cell receptor (TR) delta chain that participates in the antigen recognition. Gamma-delta TRs recognize a variety of self and foreign non-peptide antigens frequently expressed at the epithelial boundaries between the host and external environment, including endogenous lipids presented by MH-like protein CD1D and phosphoantigens presented by butyrophilin-like molecule BTN3A1. Upon antigen recognition induces rapid, innate-like immune responses involved in pathogen clearance and tissue repair. Binding of gamma-delta TR complex to antigen triggers phosphorylation of immunoreceptor tyrosine-based activation motifs (ITAMs) in the CD3 chains by the LCK and FYN kinases, allowing the recruitment, phosphorylation, and activation of ZAP70 that facilitates phosphorylation of the scaffolding proteins LCP2 and LAT. This lead to the formation of a supramolecular signalosome that recruits the phospholipase PLCG1, resulting in calcium mobilization and ERK activation, ultimately leading to T cell expansion and differentiation into effector cells. Gamma-delta TRs are produced through somatic rearrangement of a limited repertoire of variable (V), diversity (D), and joining (J) genes. The potential diversity of gamma-delta TRs is conferred by the unique ability to rearrange (D) genes in tandem and to utilize all three reading frames. The combinatorial diversity is considerably increased by the sequence exonuclease trimming and random nucleotide (N) region additions which occur during the V-(D)-J rearrangements. This chain is T cell receptor delta constant, found in Homo sapiens (Human).